Here is a 309-residue protein sequence, read N- to C-terminus: Ribonuclease Z (309 aa).

7 residues coordinate Zn(2+): His63, His65, Asp67, His68, His141, Asp212, and His270. Asp67 acts as the Proton acceptor in catalysis.

This sequence belongs to the RNase Z family. In terms of assembly, homodimer. It depends on Zn(2+) as a cofactor.

It carries out the reaction Endonucleolytic cleavage of RNA, removing extra 3' nucleotides from tRNA precursor, generating 3' termini of tRNAs. A 3'-hydroxy group is left at the tRNA terminus and a 5'-phosphoryl group is left at the trailer molecule.. Zinc phosphodiesterase, which displays some tRNA 3'-processing endonuclease activity. Probably involved in tRNA maturation, by removing a 3'-trailer from precursor tRNA. This Lactobacillus gasseri (strain ATCC 33323 / DSM 20243 / BCRC 14619 / CIP 102991 / JCM 1131 / KCTC 3163 / NCIMB 11718 / NCTC 13722 / AM63) protein is Ribonuclease Z.